A 101-amino-acid chain; its full sequence is Putative septation protein SpoVG (101 aa).

Belongs to the SpoVG family.

Functionally, could be involved in septation. The polypeptide is Putative septation protein SpoVG (Anaeromyxobacter dehalogenans (strain 2CP-C)).